A 470-amino-acid polypeptide reads, in one-letter code: Neuraminidase (470 aa).

Residues 1 to 6 (MNPNQK) lie on the Intravirion side of the membrane. Residues 7-27 (IITIGSISIAIGIISLMLQIG) traverse the membrane as a helical segment. Positions 11 to 33 (GSISIAIGIISLMLQIGNIISMW) are involved in apical transport and lipid raft association. Over 28 to 470 (NIISMWASHS…GAELPFTIDK (443 aa)) the chain is Virion surface. The tract at residues 36-90 (HSIQTGSQNHTGICNQRIITYENSTWVNHTYVNINNTNVVTGKDKTSVTLAGNSS) is hypervariable stalk region. 5 N-linked (GlcNAc...) asparagine; by host glycosylation sites follow: asparagine 44, asparagine 58, asparagine 63, asparagine 70, and asparagine 88. A head of neuraminidase region spans residues 91-470 (LCSISGWAIY…GAELPFTIDK (380 aa)). 8 disulfides stabilise this stretch: cysteine 92–cysteine 417, cysteine 124–cysteine 129, cysteine 184–cysteine 231, cysteine 233–cysteine 238, cysteine 279–cysteine 292, cysteine 281–cysteine 290, cysteine 318–cysteine 335, and cysteine 421–cysteine 447. Arginine 118 contacts substrate. Asparagine 146 is a glycosylation site (N-linked (GlcNAc...) asparagine; by host). Aspartate 151 serves as the catalytic Proton donor/acceptor. Residue arginine 152 participates in substrate binding. Asparagine 235 carries N-linked (GlcNAc...) asparagine; by host glycosylation. 277-278 (EE) lines the substrate pocket. Arginine 293 is a substrate binding site. Ca(2+) contacts are provided by aspartate 294, glycine 298, and aspartate 324. Residue arginine 368 coordinates substrate. The active-site Nucleophile is tyrosine 402. N-linked (GlcNAc...) asparagine; by host glycans are attached at residues asparagine 434 and asparagine 455.

Belongs to the glycosyl hydrolase 34 family. As to quaternary structure, homotetramer. The cofactor is Ca(2+). In terms of processing, N-glycosylated.

It localises to the virion membrane. Its subcellular location is the host apical cell membrane. It carries out the reaction Hydrolysis of alpha-(2-&gt;3)-, alpha-(2-&gt;6)-, alpha-(2-&gt;8)- glycosidic linkages of terminal sialic acid residues in oligosaccharides, glycoproteins, glycolipids, colominic acid and synthetic substrates.. Inhibited by the neuraminidase inhibitors zanamivir (Relenza) and oseltamivir (Tamiflu). These drugs interfere with the release of progeny virus from infected cells and are effective against all influenza strains. Resistance to neuraminidase inhibitors is quite rare. Catalyzes the removal of terminal sialic acid residues from viral and cellular glycoconjugates. Cleaves off the terminal sialic acids on the glycosylated HA during virus budding to facilitate virus release. Additionally helps virus spread through the circulation by further removing sialic acids from the cell surface. These cleavages prevent self-aggregation and ensure the efficient spread of the progeny virus from cell to cell. Otherwise, infection would be limited to one round of replication. Described as a receptor-destroying enzyme because it cleaves a terminal sialic acid from the cellular receptors. May facilitate viral invasion of the upper airways by cleaving the sialic acid moieties on the mucin of the airway epithelial cells. Likely to plays a role in the budding process through its association with lipid rafts during intracellular transport. May additionally display a raft-association independent effect on budding. Plays a role in the determination of host range restriction on replication and virulence. Sialidase activity in late endosome/lysosome traffic seems to enhance virus replication. This is Neuraminidase from Aves (Human).